Reading from the N-terminus, the 334-residue chain is uncharacterized protein (334 aa).

Residue serine 126 coordinates substrate. Tyrosine 151 acts as the Proton acceptor in catalysis.

This sequence belongs to the NAD(P)-dependent epimerase/dehydratase family. dTDP-glucose dehydratase subfamily.

This is an uncharacterized protein from Escherichia coli O111:H-.